A 341-amino-acid polypeptide reads, in one-letter code: Ketol-acid reductoisomerase (NADP(+)) (341 aa).

Residues 2–182 (TDIVYDKDAD…GGLRAGGIRT (181 aa)) form the KARI N-terminal Rossmann domain. Residues 25-28 (YGSQ), Lys48, Ser51, Ser53, and 83-86 (DQHQ) contribute to the NADP(+) site. His108 is a catalytic residue. Gly134 is a binding site for NADP(+). Residues 183 to 328 (TFTEETETDL…RELRKLFAWN (146 aa)) enclose the KARI C-terminal knotted domain. Residues Asp191, Glu195, Glu227, and Glu231 each contribute to the Mg(2+) site. Residue Ser252 coordinates substrate.

It belongs to the ketol-acid reductoisomerase family. Requires Mg(2+) as cofactor.

It catalyses the reaction (2R)-2,3-dihydroxy-3-methylbutanoate + NADP(+) = (2S)-2-acetolactate + NADPH + H(+). It carries out the reaction (2R,3R)-2,3-dihydroxy-3-methylpentanoate + NADP(+) = (S)-2-ethyl-2-hydroxy-3-oxobutanoate + NADPH + H(+). Its pathway is amino-acid biosynthesis; L-isoleucine biosynthesis; L-isoleucine from 2-oxobutanoate: step 2/4. The protein operates within amino-acid biosynthesis; L-valine biosynthesis; L-valine from pyruvate: step 2/4. Functionally, involved in the biosynthesis of branched-chain amino acids (BCAA). Catalyzes an alkyl-migration followed by a ketol-acid reduction of (S)-2-acetolactate (S2AL) to yield (R)-2,3-dihydroxy-isovalerate. In the isomerase reaction, S2AL is rearranged via a Mg-dependent methyl migration to produce 3-hydroxy-3-methyl-2-ketobutyrate (HMKB). In the reductase reaction, this 2-ketoacid undergoes a metal-dependent reduction by NADPH to yield (R)-2,3-dihydroxy-isovalerate. This is Ketol-acid reductoisomerase (NADP(+)) from Clavibacter michiganensis subsp. michiganensis (strain NCPPB 382).